An 870-amino-acid polypeptide reads, in one-letter code: Lysosomal cholesterol signaling protein (870 aa).

The Lumenal portion of the chain corresponds to 1-38 (MNSNLPAENLTIAVNMTKTLPTAVTHGFNSTNDPPSMS). The tract at residues 1-370 (MNSNLPAENL…SAWLLTFPTM (370 aa)) is PIN-like transporter. Residues N9, N15, and N29 are each glycosylated (N-linked (GlcNAc...) asparagine). A helical membrane pass occupies residues 39-59 (ITRLFPALLECFGIVLCGYIA). Cholesterol-binding residues include F43 and Y57. The Cytoplasmic portion of the chain corresponds to 60–79 (GRANVITSTQAKGLGNFVSR). A helical membrane pass occupies residues 80–100 (FALPALLFKNMVVLNFSNVDW). At 101–104 (SFLY) the chain is on the lumenal side. Residues 105–125 (SILIAKASVFFIVCVLTLLVA) traverse the membrane as a helical segment. The Cytoplasmic portion of the chain corresponds to 126 to 133 (SPDSRFSK). Residues 134 to 154 (AGLFPIFATQSNDFALGYPIV) form a discontinuously helical membrane-spanning segment. The Lumenal segment spans residues 155–167 (EALYQTTYPEYLQ). Residues 168 to 188 (YIYLVAPISLMMLNPIGFIFC) traverse the membrane as a helical segment. The Cytoplasmic segment spans residues 189–213 (EIQKWKDTQNASQNKIKIVGLGLLR). The discontinuously helical transmembrane segment at 214–234 (VLQNPIVFMVFIGIAFNFILD) threads the bilayer. The Lumenal portion of the chain corresponds to 235-243 (RKVPVYVEN). A discontinuously helical transmembrane segment spans residues 244 to 264 (FLDGLGNSFSGSALFYLGLTM). Over 265–273 (VGKIKRLKK) the chain is Cytoplasmic. Residues G266, K267, and I268 each coordinate cholesterol. A helical transmembrane segment spans residues 274 to 294 (SAFVVLILLITAKLLVLPLLC). At 295 to 315 (REMVELLDKGDSVVNHTSLSN) the chain is on the lumenal side. An N-linked (GlcNAc...) asparagine glycan is attached at N309. A discontinuously helical transmembrane segment spans residues 316-336 (YAFLYGVFPVAPGVAIFATQF). Residues 337–346 (NMEVEIITSG) are Cytoplasmic-facing. Residues 347-367 (MVISTFVSAPIMYVSAWLLTF) form a helical membrane-spanning segment. Topologically, residues 368–381 (PTMDPKPLAYAIQN) are lumenal. The interval 380 to 717 (QNVSFDISIV…FGIFGLDKHL (338 aa)) is GPCR. N381 carries N-linked (GlcNAc...) asparagine glycosylation. A helical membrane pass occupies residues 382 to 402 (VSFDISIVSLISLIWSLAILL). At 403–414 (LSKKYKQLPHML) the chain is on the cytoplasmic side. The helical transmembrane segment at 415–435 (TTNLLIAQSIVCAGMMIWNFV) threads the bilayer. The Lumenal segment spans residues 436 to 438 (KEK). Residues 439–459 (NFVGQILVFVLLYSSLYSTYL) form a helical membrane-spanning segment. Residues 460 to 480 (WTGLLAISLFLLKKRERVQIP) are Cytoplasmic-facing. Residues 481–501 (VGIIIISGWGIPALLVGVLLI) traverse the membrane as a helical segment. Over 502 to 520 (TGKHNGDSIDSAFFYGKEQ) the chain is Lumenal. Residues 521-541 (MITTAVTLFCSILIAGISLMC) form a helical membrane-spanning segment. Topologically, residues 542–660 (MNQTAQAGSY…GDQQLTRHVL (119 aa)) are cytoplasmic. R657 lines the cholesterol pocket. A helical transmembrane segment spans residues 661 to 681 (LCLLLIIGLFANLSSCLWWLF). Topologically, residues 682–691 (NQEPGRLYVE) are lumenal. The chain crosses the membrane as a helical span at residues 692–712 (LQFFCAVFNFGQGFISFGIFG). Residues 713–870 (LDKHLIILPF…SSPPSHSPKT (158 aa)) lie on the Cytoplasmic side of the membrane. One can recognise a DEP domain in the interval 757 to 835 (YHRDLCIRNI…DEYLFYRFLQ (79 aa)).

Homodimer; via the transporter region and DEP domain. Interacts with the GATOR1 complex and prevents interaction between GATOR1 and KICSTOR; this interaction is disrupted upon cholesterol starvation.

Its subcellular location is the lysosome membrane. Functionally, cholesterol-binding protein that acts as a regulator of mTORC1 signaling pathway. Acts as a sensor of cholesterol to signal cholesterol sufficiency to mTORC1: in presence of cholesterol, binds cholesterol, leading to disruption of the interaction between the GATOR1 and KICSTOR complexes and promotion of mTORC1 signaling. Upon cholesterol starvation, GPR155/LYCHOS is unable to perturb the association between GATOR1 and KICSTOR, leading to mTORC1 signaling inhibition. Binds indole-3-acetic acid and may play a role in tryptophan metabolism. This Homo sapiens (Human) protein is Lysosomal cholesterol signaling protein.